The following is a 283-amino-acid chain: HTH-type transcriptional activator RhaR (283 aa).

The HTH araC/xylS-type domain occupies 179-277 (DLLMAALGNS…GVTPRVWRQQ (99 aa)). 2 consecutive DNA-binding regions (H-T-H motif) follow at residues 196-217 (QHFC…RQQT) and 244-267 (ISEI…TRET).

As to quaternary structure, binds DNA as a dimer.

It is found in the cytoplasm. Activates expression of the rhaSR operon in response to L-rhamnose. This chain is HTH-type transcriptional activator RhaR, found in Cronobacter sakazakii (strain ATCC BAA-894) (Enterobacter sakazakii).